The following is a 218-amino-acid chain: Glutathione S-transferase Mu 2 (218 aa).

A GST N-terminal domain is found at 2–88 (PMTLGYWDIR…YLGRKHNLCG (87 aa)). 7-8 (YW) contacts glutathione. Phosphoserine occurs at positions 27 and 44. Glutathione is bound by residues 43–46 (RSQW), Lys-50, 59–60 (NL), and 72–73 (QS). Residues 90 to 214 (TEEERIRVDV…SKPIFAKMAF (125 aa)) form the GST C-terminal domain. Tyr-116 contributes to the substrate binding site. At Ser-117 the chain carries Phosphoserine.

It belongs to the GST superfamily. Mu family. As to quaternary structure, homodimer or heterodimer.

It localises to the cytoplasm. The catalysed reaction is RX + glutathione = an S-substituted glutathione + a halide anion + H(+). It carries out the reaction 11(S)-hydroxy-14(S),15(S)-epoxy-(5Z,8Z,12E)-eicosatrienoate + glutathione = (11S,15S)-dihydroxy-14(R)-S-glutathionyl-(5Z,8Z,12E)-eicosatrienoate. In terms of biological role, conjugation of reduced glutathione to a wide number of exogenous and endogenous hydrophobic electrophiles. Participates in the formation of novel hepoxilin regioisomers. The chain is Glutathione S-transferase Mu 2 from Rattus norvegicus (Rat).